Consider the following 189-residue polypeptide: 3-isopropylmalate dehydratase small subunit (189 aa).

It belongs to the LeuD family. LeuD type 1 subfamily. In terms of assembly, heterodimer of LeuC and LeuD.

It catalyses the reaction (2R,3S)-3-isopropylmalate = (2S)-2-isopropylmalate. The protein operates within amino-acid biosynthesis; L-leucine biosynthesis; L-leucine from 3-methyl-2-oxobutanoate: step 2/4. In terms of biological role, catalyzes the isomerization between 2-isopropylmalate and 3-isopropylmalate, via the formation of 2-isopropylmaleate. This is 3-isopropylmalate dehydratase small subunit from Francisella philomiragia subsp. philomiragia (strain ATCC 25017 / CCUG 19701 / FSC 153 / O#319-036).